We begin with the raw amino-acid sequence, 306 residues long: Elongation factor Ts (306 aa).

The involved in Mg(2+) ion dislocation from EF-Tu stretch occupies residues 80–83; it reads TDFV.

Belongs to the EF-Ts family.

Its subcellular location is the cytoplasm. Its function is as follows. Associates with the EF-Tu.GDP complex and induces the exchange of GDP to GTP. It remains bound to the aminoacyl-tRNA.EF-Tu.GTP complex up to the GTP hydrolysis stage on the ribosome. This chain is Elongation factor Ts, found in Clostridium kluyveri (strain NBRC 12016).